Reading from the N-terminus, the 325-residue chain is Elongation factor P--(R)-beta-lysine ligase (325 aa).

Position 76–78 (Ser-76–Glu-78) interacts with substrate. Residues Arg-100 to Glu-102 and Asn-109 contribute to the ATP site. Tyr-118 lines the substrate pocket. Glu-244 to Leu-245 serves as a coordination point for ATP. Glu-251 provides a ligand contact to substrate. Gly-300 contacts ATP.

Belongs to the class-II aminoacyl-tRNA synthetase family. EpmA subfamily. As to quaternary structure, homodimer.

The catalysed reaction is D-beta-lysine + L-lysyl-[protein] + ATP = N(6)-((3R)-3,6-diaminohexanoyl)-L-lysyl-[protein] + AMP + diphosphate + H(+). Functionally, with EpmB is involved in the beta-lysylation step of the post-translational modification of translation elongation factor P (EF-P) on 'Lys-34'. Catalyzes the ATP-dependent activation of (R)-beta-lysine produced by EpmB, forming a lysyl-adenylate, from which the beta-lysyl moiety is then transferred to the epsilon-amino group of EF-P 'Lys-34'. The protein is Elongation factor P--(R)-beta-lysine ligase of Salmonella dublin (strain CT_02021853).